The chain runs to 543 residues: ABC transport system permease protein p69 (543 aa).

The next 12 helical transmembrane spans lie at 18-38 (IWYW…YSWI), 78-98 (AFFV…FSYW), 115-135 (ITIV…SNLF), 141-161 (ATLT…TTFF), 211-231 (TLLS…PLSI), 237-257 (LVLI…VVVF), 288-308 (IIFI…LVTI), 354-374 (ISLI…SCNL), 379-399 (FSIS…ILLF), 413-433 (IILV…SINF), 482-502 (LILF…NFFE), and 510-530 (GSVT…FLSV). Residues 74–256 (LAQTAFFVTG…TFLIFIEVVV (183 aa)) enclose the ABC transmembrane type-1 domain.

It belongs to the binding-protein-dependent transport system permease family.

Its subcellular location is the cell membrane. Its function is as follows. Probably part of a high-affinity transport system. This is ABC transport system permease protein p69 (p69) from Mycoplasma genitalium (strain ATCC 33530 / DSM 19775 / NCTC 10195 / G37) (Mycoplasmoides genitalium).